The sequence spans 201 residues: Recombination protein RecR (201 aa).

Residues 57 to 72 (CADCRTFTEQEVCNIC) form a C4-type zinc finger. One can recognise a Toprim domain in the interval 81 to 176 (GQICVVESPA…EASRIAHGVP (96 aa)).

Belongs to the RecR family.

May play a role in DNA repair. It seems to be involved in an RecBC-independent recombinational process of DNA repair. It may act with RecF and RecO. The polypeptide is Recombination protein RecR (Escherichia coli O17:K52:H18 (strain UMN026 / ExPEC)).